Here is a 77-residue protein sequence, read N- to C-terminus: Tautomerase PptA (77 aa).

The Proton acceptor; via imino nitrogen role is filled by Pro2.

It belongs to the 4-oxalocrotonate tautomerase family. PptA subfamily. In terms of assembly, homodimer.

The protein resides in the cytoplasm. This chain is Tautomerase PptA, found in Escherichia coli (strain K12 / MC4100 / BW2952).